Reading from the N-terminus, the 214-residue chain is MNKAELIDVLTQKLGSDRRQATAAVENVVDTIVRAVHKGDSVTITGFGVFEQRRRAARVARNPRTGETVKVKPTSVPAFRPGAQFKAVVSGAQRLPAEGPAVKRGVGASAAKKVAKKAPAKKATKAAKKAATKAPARKAATKAPAKKAATKAPAKKAVKATKSPAKKVTKAVKKTAVKASVRKAATKAPAKKAAAKRPATKAPAKKATARRGRK.

Residue Lys3 is modified to N6-acetyllysine. Lys3 bears the N6-succinyllysine mark. Thr43 and Thr45 each carry phosphothreonine. Lys72, Lys86, and Lys103 each carry N6-acetyllysine. Residues 100–214 (PAVKRGVGAS…KKATARRGRK (115 aa)) form a disordered region. The span at 102 to 112 (VKRGVGASAAK) shows a compositional bias: low complexity. N6-succinyllysine is present on Lys113. Residues 113–214 (KVAKKAPAKK…KKATARRGRK (102 aa)) show a composition bias toward basic residues. Residues Lys116 and Lys133 each carry the N6-acetyllysine modification. Lys142 bears the N6-succinyllysine mark. Lys146 and Lys167 each carry N6-acetyllysine.

The protein belongs to the bacterial histone-like protein family. Long actinobacterial subfamily. Oligomerizes. Homodimer; the crystallized protein is missing the C-terminal 105 residues. Interacts with topoisomerase 1 (topA). Interacts with Eis. Interacts with NAD-dependent protein deacylase NPD (MRA_1161). Interacts with MRA_0812 CoA transferase. Phosphorylated in vivo on Ser and Thr-residues; the protein is degraded during purification so most sites were not identified, but at least one of Thr-43 and/or Thr-45 are modified in vivo. In vitro at least PknE, PknF and PknB phosphorylate HupB; PknE is the most active and phosphorylates many sites in vitro including Thr-43 and Thr-45. Post-translationally, acetylated on 8 Lys residues in vivo (probably by Eis). In vitro acetylated by Eis on 28 residues (strains H37Rv and H37Ra), many more than those identified in vivo. Also acetylated by MRA_0812. Deacetylated in vitro by NAD-dependent protein deacylase NPD (MRA_1161). In terms of processing, succinylated in vivo and in vitro by MRA_0812 and by Eis; only 3 residues are found to be succinylated in vivo, while 27 are modifed in vitro by MRA_0812 and 32 are succinylated by Eis. NAD-dependent protein deacylase (MRA_1161) desuccinylates this protein.

It is found in the cytoplasm. The protein localises to the nucleoid. The catalysed reaction is 4 Fe(2+) + O2 + 4 H(+) = 4 Fe(3+) + 2 H2O. With respect to regulation, two trans-stilbene derivatives, 4,4'-[(E)-ethene-1,2 diylbis({5[(phenylcarbonyl)amino]benzene-2,1-diyl}sulfonylimino)] dibenzoic acid and its methoxy derivative 4,4'-[1,2-ethenediylbis({5-[(4-methoxybenzoyl)amino]-2,1phenylene}sulfonylimino)] dibenzoic acid, respectively SD1 and SD4, inhibit DNA binding with 50% inhibition at 20 uM for SD1 and 1.7 uM for SD4. SD1 and SD4 have minimal inhibitory concentrations of 400 and 800 uM on strain H37Ra respectively. Its function is as follows. A nucleoid-associated protein (NAP) that plays a role in local chromosome architecture. Binds DNA non-sequence specifically; in vitro phosphorylation of an N-terminal fragment decreases DNA-binding. Stimulates supercoiling relaxation by topoisomerase 1 (Top1, topA), at higher than 80 uM inhibits relaxation, has no effect on DNA gyrase; the effect is independent of DNA-binding. Increases the intervening strand passage activity of Top1 that occurs between the two catalytic trans-esterification reactions. Does not bind ssDNA, probably helps condense chromosomes. Binds dsDNA; in vitro acetylated protein binds 10-fold less well to DNA (note in vitro acetylated protein is more heavily modified than in vivo modified protein). In vitro acetylated protein compacts DNA less well than unmodified protein. In vitro succinylated DNA bind dsDNA less well than unmodified protein (note in vitro succinylated protein is more heavily modified than in vivo modified protein). In terms of biological role, has ferroxidase activity, converts Fe(2+) into Fe(3+). Binds Fe(3+) but not Fe(2+); prevents the generation of hydroxyl radicals by the Fenton reaction and thus protects DNA from damage. May function in iron storage. Required for biofilm formation; trimethylation by recombinant human SUV39H1 (a histone methyltransferase) inhibits biofilm formation. Probably influences transcription. RNase E and HupB jointly contribute to cellular adaptation to changing growth conditions and survival during antibiotic treatment and in the host. This is DNA-binding protein HupB from Mycobacterium tuberculosis (strain ATCC 25177 / H37Ra).